We begin with the raw amino-acid sequence, 185 residues long: MARLMSSALIRGLVRSSCSPTVAAVAQPTIHQFRNYSSGLGGDSTATGDSSSTRVAADPDTHQDFQPTTKSSNMSFDDIVSQDIKENPVLIYMKGYPDAPRCGFSALAVRVLKQYDVPISARDILGDLKLKESVKAHTNWPTFPQIFIKGEFVGGSDIILDMHQKGQLKDVLGDIAQKREQNESS.

A mitochondrion-targeting transit peptide spans 1-36 (MARLMSSALIRGLVRSSCSPTVAAVAQPTIHQFRNY). Residues 37 to 74 (SSGLGGDSTATGDSSSTRVAADPDTHQDFQPTTKSSNM) form a disordered region. Residues 43-53 (DSTATGDSSST) are compositionally biased toward low complexity. The segment covering 64-74 (DFQPTTKSSNM) has biased composition (polar residues). The 103-residue stretch at 77-179 (DDIVSQDIKE…DVLGDIAQKR (103 aa)) folds into the Glutaredoxin domain. Position 94 (Lys-94) interacts with glutathione. Cys-102 is a [2Fe-2S] cluster binding site. Glutathione is bound by residues Lys-131, Phe-143, and 156 to 157 (SD).

This sequence belongs to the glutaredoxin family. CGFS subfamily.

Its subcellular location is the mitochondrion. Functionally, may only reduce GSH-thiol disulfides, but not protein disulfides. This chain is Monothiol glutaredoxin-S4, mitochondrial (GRXS4), found in Oryza sativa subsp. japonica (Rice).